Consider the following 483-residue polypeptide: Probable 4-aminobutyrate aminotransferase, mitochondrial (483 aa).

148–149 (GT) serves as a coordination point for pyridoxal 5'-phosphate. Arg204 contributes to the substrate binding site. The residue at position 341 (Lys341) is an N6-(pyridoxal phosphate)lysine. Thr365 contributes to the pyridoxal 5'-phosphate binding site.

The protein belongs to the class-III pyridoxal-phosphate-dependent aminotransferase family. In terms of assembly, homodimer. Pyridoxal 5'-phosphate serves as cofactor.

It is found in the mitochondrion matrix. It catalyses the reaction 4-aminobutanoate + 2-oxoglutarate = succinate semialdehyde + L-glutamate. The enzyme catalyses (S)-3-amino-2-methylpropanoate + 2-oxoglutarate = 2-methyl-3-oxopropanoate + L-glutamate. In Caenorhabditis elegans, this protein is Probable 4-aminobutyrate aminotransferase, mitochondrial (gta-1).